Reading from the N-terminus, the 583-residue chain is MKLLHVFLLFLCFHLSFCKVTYTSQEDLVEKKCLAKKHTHLSCNKVFCQPWQICIEGTCICKLPYQCPKNGTTVCATNGRSFPTYCQQKSLECLRPGTKFLNNGTCTAEGKFSVSLKHGNTDSEGIVEVKLVDQDKTMFICKSSWSMREANVACLDLGFQQGADTQRRFKLSNLSINSTECLHVHCRGLETSLAECTFTKRRTMGYQDLADVVCYTQKADSPTNDFFQCVNGKYISQMKACDGINDCGDQSDELCCKACQGKSFHCKSGVCIPSQYRCNGEVDCITGEDEVGCEGFASVAQEETEILTADMDAERRRIKSLLPKLSCGVKNRRHIRRKRIVGGKRAQLGDLPWQVGIKDASGITCGGIYIGGCWILTAAHCLRASKTHHYQIWTTVVDWIHPDRKRIVIEYVDRIIFHENYNAGTYQNDIALMEMKKDGNKKDCELPRSIPACVPWSPYLFQPNDTCIVSGWGREKDNEKVFSLQWGEVKLISNCSKFYGNRFYEKEMECAGTYDGSIDACKGDSGGPLVCMDANNVTYVWGVVSWGENCGKPEFPGVYTKVANYFDWISYHVGRPFISQYNV.

Residues 1–18 (MKLLHVFLLFLCFHLSFC) form the signal peptide. Cystine bridges form between Cys33/Cys255, Cys43/Cys54, Cys48/Cys59, Cys61/Cys93, Cys67/Cys86, Cys75/Cys106, Cys141/Cys181, Cys154/Cys214, Cys186/Cys196, Cys229/Cys247, Cys259/Cys271, Cys266/Cys284, Cys278/Cys293, Cys327/Cys453, Cys365/Cys381, and Cys373/Cys444. Positions 55–108 (IEGTCICKLPYQCPKNGTTVCATNGRSFPTYCQQKSLECLRPGTKFLNNGTCTA) constitute a Kazal-like domain. N-linked (GlcNAc...) asparagine glycosylation is found at Asn70, Asn103, Asn173, and Asn177. One can recognise an SRCR domain in the interval 114–212 (VSLKHGNTDS…TMGYQDLADV (99 aa)). LDL-receptor class A domains lie at 213–257 (VCYT…LCCK) and 258–294 (ACQGKSFHCKSGVCIPSQYRCNGEVDCITGEDEVGCE). 6 residues coordinate Ca(2+): Lys239, Asp242, Ile244, Asp246, Asp252, and Glu253. Residues Tyr276, Asn279, Glu281, Asp283, Asp289, and Glu290 each contribute to the Ca(2+) site. Residues 340–574 (IVGGKRAQLG…YFDWISYHVG (235 aa)) enclose the Peptidase S1 domain. Active-site charge relay system residues include His380 and Asp429. N-linked (GlcNAc...) asparagine glycosylation is found at Asn464 and Asn494. 3 cysteine pairs are disulfide-bonded: Cys467/Cys531, Cys495/Cys510, and Cys521/Cys550. Catalysis depends on Ser525, which acts as the Charge relay system. N-linked (GlcNAc...) asparagine glycosylation occurs at Asn536.

It belongs to the peptidase S1 family. In terms of assembly, heterodimer of a light and heavy chains; disulfide-linked. The fully processed and mature protein circulates as a zymogen, and is allosterically activated by substrate-induced remodeling of the active site. Plasma.

The protein resides in the secreted. Its subcellular location is the extracellular space. The catalysed reaction is Inactivates complement subcomponents C3b, iC3b and C4b by proteolytic cleavage.. Its function is as follows. Responsible for cleaving the alpha-chains of C4b and C3b in the presence of the cofactors C4-binding protein and factor H respectively. In Pongo abelii (Sumatran orangutan), this protein is Complement factor I (CFI).